A 172-amino-acid chain; its full sequence is Methylated-DNA--protein-cysteine methyltransferase (172 aa).

Cys-142 (nucleophile; methyl group acceptor) is an active-site residue.

This sequence belongs to the MGMT family.

It is found in the cytoplasm. The enzyme catalyses a 6-O-methyl-2'-deoxyguanosine in DNA + L-cysteinyl-[protein] = S-methyl-L-cysteinyl-[protein] + a 2'-deoxyguanosine in DNA. It carries out the reaction a 4-O-methyl-thymidine in DNA + L-cysteinyl-[protein] = a thymidine in DNA + S-methyl-L-cysteinyl-[protein]. Functionally, involved in the cellular defense against the biological effects of O6-methylguanine (O6-MeG) and O4-methylthymine (O4-MeT) in DNA. Repairs the methylated nucleobase in DNA by stoichiometrically transferring the methyl group to a cysteine residue in the enzyme. This is a suicide reaction: the enzyme is irreversibly inactivated. The protein is Methylated-DNA--protein-cysteine methyltransferase of Pyrococcus horikoshii (strain ATCC 700860 / DSM 12428 / JCM 9974 / NBRC 100139 / OT-3).